We begin with the raw amino-acid sequence, 1306 residues long: Angiotensin-converting enzyme (1306 aa).

The N-terminal stretch at 1-28 is a signal peptide; sequence MGAASGRRSPPLLLPLLLLLLPPPPVIL. At 29-1256 the chain is on the extracellular side; it reads ELDPALQPGN…GLNLEEQQAR (1228 aa). Peptidase M2 domains lie at 40–624 and 643–1222; these read PADE…LGWP and VSDE…LGWP. N-linked (GlcNAc...) asparagine glycosylation is found at asparagine 54, asparagine 74, asparagine 111, asparagine 146, and asparagine 160. The cysteines at positions 157 and 165 are disulfide-linked. Residue tyrosine 231 participates in chloride binding. Asparagine 318 is a glycosylation site (N-linked (GlcNAc...) asparagine). Residues cysteine 359 and cysteine 377 are joined by a disulfide bond. Residue histidine 390 participates in Zn(2+) binding. The active-site Proton acceptor 1 is the glutamate 391. Zn(2+) contacts are provided by histidine 394 and glutamate 418. Residues asparagine 445 and asparagine 509 are each glycosylated (N-linked (GlcNAc...) asparagine). Catalysis depends on histidine 520, which acts as the Proton donor 1. A glycan (N-linked (GlcNAc...) asparagine) is linked at asparagine 523. Arginine 529 lines the chloride pocket. A disulfide bridge connects residues cysteine 545 and cysteine 557. 4 N-linked (GlcNAc...) asparagine glycosylation sites follow: asparagine 673, asparagine 695, asparagine 714, and asparagine 760. A disulfide bridge connects residues cysteine 757 and cysteine 763. Residues arginine 791 and tyrosine 829 each contribute to the chloride site. N-linked (GlcNAc...) asparagine glycosylation occurs at asparagine 942. Cysteine 957 and cysteine 975 are oxidised to a cystine. Histidine 988 provides a ligand contact to Zn(2+). Glutamate 989 functions as the Proton acceptor 2 in the catalytic mechanism. Positions 992 and 1016 each coordinate Zn(2+). 2 residues coordinate chloride: tryptophan 1090 and arginine 1094. Residue histidine 1118 is the Proton donor 2 of the active site. Arginine 1127 contributes to the chloride binding site. Cysteine 1143 and cysteine 1155 are oxidised to a cystine. 2 N-linked (GlcNAc...) asparagine glycosylation sites follow: asparagine 1191 and asparagine 1225. The segment at 1215–1256 is juxtamembrane stalk; it reads HGEKLGWPQYNWTPNSARLEGPFVGSGRVNFLGLNLEEQQAR. The helical transmembrane segment at 1257 to 1277 threads the bilayer; sequence VGQWVLLFLGVALLVATLGLT. Residues 1278–1306 lie on the Cytoplasmic side of the membrane; that stretch reads QRLFSIRHHSLRRPHRGPQFGSEVELRHS. Serine 1299 is modified (phosphoserine).

Belongs to the peptidase M2 family. Monomer and homodimer; homodimerizes following binding to an inhibitor. Interacts with calmodulin (CALM1, CALM2 or CALM3); interaction takes place in the cytoplasmic region and regulates phosphorylation and proteolytic cleavage. The cofactor is Zn(2+). Chloride serves as cofactor. Post-translationally, produced following proteolytic cleavage by secretase enzymes that cleave the transmembrane form in the juxtamembrane stalk region upstream of the transmembrane region. Cleavage can take place at different sites of the juxtamembrane stalk region. Phosphorylated by CK2 on Ser-1299; which allows membrane retention. Phosphorylated on tyrosine residues on its extracellular part, promoting cleavage by secretase enzymes and formation of the soluble form (Angiotensin-converting enzyme, soluble form).

It is found in the cell membrane. Its subcellular location is the cytoplasm. The protein localises to the secreted. It carries out the reaction Release of a C-terminal dipeptide, oligopeptide-|-Xaa-Yaa, when Xaa is not Pro, and Yaa is neither Asp nor Glu. Thus, conversion of angiotensin I to angiotensin II, with increase in vasoconstrictor activity, but no action on angiotensin II.. It catalyses the reaction angiotensin I + H2O = L-histidyl-L-leucine + angiotensin II. The enzyme catalyses bradykinin + H2O = L-Phe-L-Arg + bradykinin(1-7). The catalysed reaction is substance P + H2O = substance P(1-9) + L-Leu-L-Met-NH2. It carries out the reaction substance P + H2O = substance P(1-8) + Gly-L-Leu-L-Met-NH2. It catalyses the reaction substance P + H2O = L-Phe-L-Phe-Gly-L-Leu-L-Met-NH2 + substance P(1-6). The enzyme catalyses neurotensin + H2O = neurotensin(1-11) + L-isoleucyl-L-leucine. The catalysed reaction is goralatide + H2O = N-acetyl-L-seryl-L-aspartate + L-lysyl-L-proline. It carries out the reaction Met-enkephalin + H2O = L-phenylalanyl-L-methionine + L-tyrosylglycylglycine. It catalyses the reaction Leu-enkephalin + H2O = L-tyrosylglycylglycine + L-phenylalanyl-L-leucine. The enzyme catalyses Met-enkephalin-Arg-Phe + H2O = L-arginyl-L-phenylalanine + Met-enkephalin. With respect to regulation, the dipeptidyl carboxypeptidase activity is strongly activated by chloride. The dipeptidyl carboxypeptidase activity is specifically inhibited by lisinopril, captopril and enalaprilat. Dipeptidyl carboxypeptidase that removes dipeptides from the C-terminus of a variety of circulating hormones, such as angiotensin I, bradykinin or enkephalins, thereby playing a key role in the regulation of blood pressure, electrolyte homeostasis or synaptic plasticity. Composed of two similar catalytic domains, each possessing a functional active site, with different selectivity for substrates. Plays a major role in the angiotensin-renin system that regulates blood pressure and sodium retention by the kidney by converting angiotensin I to angiotensin II, resulting in an increase of the vasoconstrictor activity of angiotensin. Also able to inactivate bradykinin, a potent vasodilator, and therefore enhance the blood pressure response. Acts as a regulator of synaptic transmission by mediating cleavage of neuropeptide hormones, such as substance P, neurotensin or enkephalins. Catalyzes degradation of different enkephalin neuropeptides (Met-enkephalin, Leu-enkephalin, Met-enkephalin-Arg-Phe and possibly Met-enkephalin-Arg-Gly-Leu). Acts as a regulator of synaptic plasticity in the nucleus accumbens of the brain by mediating cleavage of Met-enkephalin-Arg-Phe, a strong ligand of Mu-type opioid receptor OPRM1, into Met-enkephalin. Met-enkephalin-Arg-Phe cleavage by ACE decreases activation of OPRM1, leading to long-term synaptic potentiation of glutamate release. Also acts as a regulator of hematopoietic stem cell differentiation by mediating degradation of hemoregulatory peptide N-acetyl-SDKP (AcSDKP). Acts as a regulator of cannabinoid signaling pathway by mediating degradation of hemopressin, an antagonist peptide of the cannabinoid receptor CNR1. Involved in amyloid-beta metabolism by catalyzing degradation of Amyloid-beta protein 40 and Amyloid-beta protein 42 peptides, thereby preventing plaque formation. Catalyzes cleavage of cholecystokinin (maturation of Cholecystokinin-8 and Cholecystokinin-5) and Gonadoliberin-1 (both maturation and degradation) hormones. Degradation of hemoregulatory peptide N-acetyl-SDKP (AcSDKP) and amyloid-beta proteins is mediated by the N-terminal catalytic domain, while angiotensin I and cholecystokinin cleavage is mediated by the C-terminal catalytic region. Its function is as follows. Soluble form that is released in blood plasma and other body fluids following proteolytic cleavage in the juxtamembrane stalk region. This Bos taurus (Bovine) protein is Angiotensin-converting enzyme.